Consider the following 559-residue polypeptide: 3-phosphoinositide-dependent protein kinase 1 (559 aa).

Tyr9 carries the phosphotyrosine; by SRC and INSR modification. Phosphoserine is present on Ser25. The tract at residues 25–83 (SPSMVRSQTEPSSSPGIPSGVSRQGSTMDGTTAEARPSTNPLQQHPAQLPPQPRKKRPE) is disordered. A compositionally biased stretch (low complexity) spans 35 to 46 (PSSSPGIPSGVS). A Protein kinase domain is found at 85–345 (FKFGKILGEG…YGPLKAHPFF (261 aa)). Residues 95–97 (SFS) and Lys114 each bind ATP. The segment at 116–160 (LEKRHIIKENKVPYVTRERDVMSRLDHPFFVKLYFTFQDDEKLYF) is PIF-pocket. Residues 163–165 (SYA) and Glu169 contribute to the ATP site. Catalysis depends on Asp208, which acts as the Proton acceptor. Glu212 and Asp226 together coordinate ATP. Residue Ser244 is modified to Phosphoserine. The residue at position 307 (Lys307) is an N6-acetyllysine. Thr357 carries the phosphothreonine; by MELK modification. A phosphotyrosine; by SRC and INSR mark is found at Tyr376 and Tyr379. Ser396 is modified (phosphoserine). Phosphoserine; by MAP3K5 is present on Ser397. Ser399 carries the phosphoserine modification. Ser401 bears the Phosphoserine; by MAP3K5 mark. Ser413 carries the post-translational modification Phosphoserine. In terms of domain architecture, PH spans 462 to 553 (KMGPVDKRKG…EVWRQQYQSS (92 aa)). Ser504 is modified (phosphoserine; by PKC/PRKCQ). Thr516 is subject to Phosphothreonine; by autocatalysis. Position 532 is a phosphoserine; by PKC/PRKCQ (Ser532).

Belongs to the protein kinase superfamily. AGC Ser/Thr protein kinase family. PDPK1 subfamily. As to quaternary structure, homodimer in its autoinhibited state. Active as monomer. Interacts with NPRL2, PPARG, PAK1, PTK2B, GRB14, PKN1 (via C-terminus), STRAP and IKKB. The Tyr-9 phosphorylated form interacts with SRC, RASA1 and CRK (via their SH2 domains). Interacts with SGK3 in a phosphorylation-dependent manner. The tyrosine-phosphorylated form interacts with PTPN6. The Ser-244 phosphorylated form interacts with YWHAH and YWHAQ. Binds INSR in response to insulin. Interacts (via PH domain) with SMAD3, SMAD4 and SMAD7. Interacts with PKN2; the interaction stimulates PDPK1 autophosphorylation, its PI(3,4,5)P3-dependent kinase activity toward 'Ser-473' of AKT1 but also activates its kinase activity toward PRKCD and PRKCZ. Phosphorylation on Ser-244 in the activation loop is required for full activity. PDPK1 itself can autophosphorylate Ser-244, leading to its own activation. Autophosphorylation is inhibited by the apoptotic C-terminus cleavage product of PKN2. Tyr-9 phosphorylation is critical for stabilization of both PDPK1 and the PDPK1/SRC complex via HSP90-mediated protection of PDPK1 degradation. Angiotensin II stimulates the tyrosine phosphorylation of PDPK1 in vascular smooth muscle in a calcium- and SRC-dependent manner. Phosphorylated on Tyr-9, Tyr-376 and Tyr-379 by INSR in response to insulin. Palmitate negatively regulates autophosphorylation at Ser-244 and palmitate-induced phosphorylation at Ser-532 and Ser-504 by PKC/PRKCQ negatively regulates its ability to phosphorylate PKB/AKT1. Phosphorylation at Thr-357 by MELK partially inhibits kinase activity, the inhibition is cooperatively enhanced by phosphorylation at Ser-397 and Ser-401 by MAP3K5. In terms of processing, monoubiquitinated in the kinase domain, deubiquitinated by USP4.

It is found in the cytoplasm. Its subcellular location is the nucleus. The protein localises to the cell membrane. It localises to the cell junction. The protein resides in the focal adhesion. The catalysed reaction is L-seryl-[protein] + ATP = O-phospho-L-seryl-[protein] + ADP + H(+). The enzyme catalyses L-threonyl-[protein] + ATP = O-phospho-L-threonyl-[protein] + ADP + H(+). With respect to regulation, homodimerization regulates its activity by maintaining the kinase in an autoinhibitory conformation. NPRL2 down-regulates its activity by interfering with tyrosine phosphorylation at the Tyr-9, Tyr-376 and Tyr-379 residues. The 14-3-3 protein YWHAQ acts as a negative regulator by association with the residues surrounding the Ser-244 residue. STRAP positively regulates its activity by enhancing its autophosphorylation and by stimulating its dissociation from YWHAQ. SMAD2, SMAD3, SMAD4 and SMAD7 also positively regulate its activity by stimulating its dissociation from YWHAQ. Activated by phosphorylation on Tyr-9, Tyr-376 and Tyr-379 by INSR in response to insulin. Serine/threonine kinase which acts as a master kinase, phosphorylating and activating a subgroup of the AGC family of protein kinases. Its targets include: protein kinase B (PKB/AKT1, PKB/AKT2, PKB/AKT3), p70 ribosomal protein S6 kinase (RPS6KB1), p90 ribosomal protein S6 kinase (RPS6KA1, RPS6KA2 and RPS6KA3), cyclic AMP-dependent protein kinase (PRKACA), protein kinase C (PRKCD and PRKCZ), serum and glucocorticoid-inducible kinase (SGK1, SGK2 and SGK3), p21-activated kinase-1 (PAK1), TSSK3, protein kinase PKN (PKN1 and PKN2). Plays a central role in the transduction of signals from insulin by providing the activating phosphorylation to PKB/AKT1, thus propagating the signal to downstream targets controlling cell proliferation and survival, as well as glucose and amino acid uptake and storage. Negatively regulates the TGF-beta-induced signaling by: modulating the association of SMAD3 and SMAD7 with TGF-beta receptor, phosphorylating SMAD2, SMAD3, SMAD4 and SMAD7, preventing the nuclear translocation of SMAD3 and SMAD4 and the translocation of SMAD7 from the nucleus to the cytoplasm in response to TGF-beta. Activates PPARG transcriptional activity and promotes adipocyte differentiation. Activates the NF-kappa-B pathway via phosphorylation of IKKB. The tyrosine phosphorylated form is crucial for the regulation of focal adhesions by angiotensin II. Controls proliferation, survival, and growth of developing pancreatic cells. Participates in the regulation of Ca(2+) entry and Ca(2+)-activated K(+) channels of mast cells. Essential for the motility of vascular endothelial cells (ECs) and is involved in the regulation of their chemotaxis. Plays a critical role in cardiac homeostasis by serving as a dual effector for cell survival and beta-adrenergic response. Plays an important role during thymocyte development by regulating the expression of key nutrient receptors on the surface of pre-T cells and mediating Notch-induced cell growth and proliferative responses. Provides negative feedback inhibition to toll-like receptor-mediated NF-kappa-B activation in macrophages. The sequence is that of 3-phosphoinositide-dependent protein kinase 1 (Pdpk1) from Rattus norvegicus (Rat).